We begin with the raw amino-acid sequence, 597 residues long: Inactive metallocarboxypeptidase ECM14 (597 aa).

Residues 1 to 21 (MRLFTHGQVLALLAFVNTISA) form the signal peptide. Positions 22 to 174 (TPSFSTNSYP…QTIYESYPSP (153 aa)) are excised as a propeptide. Positions 170 to 179 (SYPSPSQSPS) are enriched in low complexity. Residues 170–189 (SYPSPSQSPSGRERGFLPSG) are disordered. The Peptidase M14 domain occupies 202–522 (NYQPLSVIVP…NAVMMLGRFL (321 aa)). Positions 264 and 267 each coordinate Zn(2+). Substrate is bound by residues 264-267 (HARE), R322, and 339-340 (DR). C333 and C356 are oxidised to a cystine. The N-linked (GlcNAc...) asparagine glycan is linked to N349. H396 serves as a coordination point for Zn(2+). Residue 397–398 (SY) coordinates substrate. The interval 543-597 (KDDKPILNDDDDDDADTNDDGIGRKDDSWIPDEYKGDNDRDESDGGWAFRRLRKR) is disordered. Residues 550-561 (NDDDDDDADTND) show a composition bias toward acidic residues. Over residues 563 to 580 (GIGRKDDSWIPDEYKGDN) the composition is skewed to basic and acidic residues.

The protein belongs to the peptidase M14 family. Requires Zn(2+) as cofactor.

The protein localises to the vacuole. The protein resides in the secreted. Functionally, inactive carboxypeptidase that may play a role in cell wall organization and biogenesis. This is Inactive metallocarboxypeptidase ECM14 (ECM14) from Ajellomyces capsulatus (strain G186AR / H82 / ATCC MYA-2454 / RMSCC 2432) (Darling's disease fungus).